A 669-amino-acid polypeptide reads, in one-letter code: DNA ligase (669 aa).

NAD(+)-binding positions include 34-38, 83-84, and glutamate 114; these read DAEYD and SL. Lysine 116 (N6-AMP-lysine intermediate) is an active-site residue. NAD(+) is bound by residues arginine 137, glutamate 171, lysine 287, and lysine 311. Zn(2+) is bound by residues cysteine 405, cysteine 408, cysteine 423, and cysteine 428. Positions 591-669 constitute a BRCT domain; sequence NVESYFAGKT…EERFLQELNK (79 aa).

This sequence belongs to the NAD-dependent DNA ligase family. LigA subfamily. Requires Mg(2+) as cofactor. The cofactor is Mn(2+).

It catalyses the reaction NAD(+) + (deoxyribonucleotide)n-3'-hydroxyl + 5'-phospho-(deoxyribonucleotide)m = (deoxyribonucleotide)n+m + AMP + beta-nicotinamide D-nucleotide.. Its function is as follows. DNA ligase that catalyzes the formation of phosphodiester linkages between 5'-phosphoryl and 3'-hydroxyl groups in double-stranded DNA using NAD as a coenzyme and as the energy source for the reaction. It is essential for DNA replication and repair of damaged DNA. In Bacillus cereus (strain ATCC 14579 / DSM 31 / CCUG 7414 / JCM 2152 / NBRC 15305 / NCIMB 9373 / NCTC 2599 / NRRL B-3711), this protein is DNA ligase.